Consider the following 344-residue polypeptide: 17-beta-hydroxysteroid dehydrogenase type 1 (344 aa).

3-32 (PTVVLITGCSSGIGMHLAVRLASDRSQSFK) is a binding site for NAD(+). NADP(+) is bound by residues 10 to 38 (GCSSGIGMHLAVRLASDRSQSFKVYATLR) and D66. At S135 the chain carries Phosphoserine. Residue S143 coordinates substrate. Y156 (proton acceptor) is an active-site residue. K160 contacts NADP(+).

It belongs to the short-chain dehydrogenases/reductases (SDR) family. In terms of assembly, homodimer. Exists predominantly as a homodimer but also exits as monomer.

It is found in the cytoplasm. It catalyses the reaction 17beta-estradiol + NAD(+) = estrone + NADH + H(+). It carries out the reaction 17beta-estradiol + NADP(+) = estrone + NADPH + H(+). The catalysed reaction is testosterone + NADP(+) = androst-4-ene-3,17-dione + NADPH + H(+). Its pathway is steroid biosynthesis; estrogen biosynthesis. Favors the reduction of estrogens and androgens. Converts estrone (E1) to a more potent estrogen, 17beta-estradiol (E2). Also has 20-alpha-HSD activity. Uses preferentially NADH. In Mus musculus (Mouse), this protein is 17-beta-hydroxysteroid dehydrogenase type 1.